A 483-amino-acid polypeptide reads, in one-letter code: Protein FIZZY-RELATED 2 (483 aa).

The disordered stretch occupies residues 1-28 (MEEEDPTASNVITNSNSSSMRNLSPAMN). Residues 7–28 (TASNVITNSNSSSMRNLSPAMN) are compositionally biased toward polar residues. 7 WD repeats span residues 174–211 (QDDF…VTKL), 215–254 (GAED…RTRT), 257–294 (GHRL…DHVS), 298–337 (GHKS…PVLK), 340–382 (EHTA…HLSS), 384–425 (DTCS…KIAT), and 428–467 (GHTY…KSQN).

Belongs to the WD repeat CDC20/Fizzy family. As to quaternary structure, associates with the APC/C complex. Interacts with CDC20-1, CDC20-2, CYCA1-1, CYCA1-2, CYCA3-4, CYCB1-1 and CYCB1-2. Binds to GIG1 and PYM. As to expression, expressed in seedlings, flowers, leaves and roots. Expressed in the differentiating cell files of the root elongation zone.

Its subcellular location is the nucleus. It participates in protein modification; protein ubiquitination. Functionally, activator protein that regulates the ubiquitin ligase activity and substrate specificity of the anaphase promoting complex/cyclosome (APC/C). Necessary and sufficient for endoreduplication and correct cell expansion. Controls meristem size by stimulating endoreduplication in the elongation zone. The protein is Protein FIZZY-RELATED 2 (FZR2) of Arabidopsis thaliana (Mouse-ear cress).